The sequence spans 326 residues: Phospho-N-acetylmuramoyl-pentapeptide-transferase (326 aa).

The next 9 helical transmembrane spans lie at 3–23 (ISIS…PAFI), 51–71 (TMGG…FALF), 79–99 (VGMI…DDFL), 115–135 (LALQ…GGDI), 138–158 (VFGY…FWLV), 169–189 (GVDG…GVIA), 195–215 (MDIL…FIFN), 221–243 (VFMG…MALH), and 306–326 (FFFW…LYLM).

This sequence belongs to the glycosyltransferase 4 family. MraY subfamily. Requires Mg(2+) as cofactor.

The protein localises to the cell membrane. The enzyme catalyses UDP-N-acetyl-alpha-D-muramoyl-L-alanyl-gamma-D-glutamyl-L-lysyl-D-alanyl-D-alanine + di-trans,octa-cis-undecaprenyl phosphate = Mur2Ac(oyl-L-Ala-gamma-D-Glu-L-Lys-D-Ala-D-Ala)-di-trans,octa-cis-undecaprenyl diphosphate + UMP. It functions in the pathway cell wall biogenesis; peptidoglycan biosynthesis. Its function is as follows. Catalyzes the initial step of the lipid cycle reactions in the biosynthesis of the cell wall peptidoglycan: transfers peptidoglycan precursor phospho-MurNAc-pentapeptide from UDP-MurNAc-pentapeptide onto the lipid carrier undecaprenyl phosphate, yielding undecaprenyl-pyrophosphoryl-MurNAc-pentapeptide, known as lipid I. The polypeptide is Phospho-N-acetylmuramoyl-pentapeptide-transferase (Streptococcus pneumoniae serotype 19F (strain G54)).